The primary structure comprises 398 residues: tRNA-specific 2-thiouridylase MnmA (398 aa).

Residues 18 to 25 (AMSGGVDS) and L44 contribute to the ATP site. The active-site Nucleophile is the C112. A disulfide bridge links C112 with C213. G136 provides a ligand contact to ATP. Residues 163–165 (RDQ) are interaction with tRNA. Residue C213 is the Cysteine persulfide intermediate of the active site.

It belongs to the MnmA/TRMU family.

The protein resides in the cytoplasm. The catalysed reaction is S-sulfanyl-L-cysteinyl-[protein] + uridine(34) in tRNA + AH2 + ATP = 2-thiouridine(34) in tRNA + L-cysteinyl-[protein] + A + AMP + diphosphate + H(+). Its function is as follows. Catalyzes the 2-thiolation of uridine at the wobble position (U34) of tRNA, leading to the formation of s(2)U34. The protein is tRNA-specific 2-thiouridylase MnmA of Sinorhizobium fredii (strain NBRC 101917 / NGR234).